The following is a 454-amino-acid chain: tRNA modification GTPase MnmE (454 aa).

The (6S)-5-formyl-5,6,7,8-tetrahydrofolate site is built by arginine 23, glutamate 80, and lysine 120. The TrmE-type G domain maps to glycine 216 to glycine 377. Asparagine 226 provides a ligand contact to K(+). Residues asparagine 226–serine 231, threonine 245–threonine 251, aspartate 270–glycine 273, asparagine 335–aspartate 338, and serine 358–arginine 360 each bind GTP. Serine 230 is a Mg(2+) binding site. 3 residues coordinate K(+): threonine 245, isoleucine 247, and threonine 250. Threonine 251 contacts Mg(2+). Lysine 454 is a (6S)-5-formyl-5,6,7,8-tetrahydrofolate binding site.

It belongs to the TRAFAC class TrmE-Era-EngA-EngB-Septin-like GTPase superfamily. TrmE GTPase family. In terms of assembly, homodimer. Heterotetramer of two MnmE and two MnmG subunits. K(+) is required as a cofactor.

The protein resides in the cytoplasm. Its function is as follows. Exhibits a very high intrinsic GTPase hydrolysis rate. Involved in the addition of a carboxymethylaminomethyl (cmnm) group at the wobble position (U34) of certain tRNAs, forming tRNA-cmnm(5)s(2)U34. The protein is tRNA modification GTPase MnmE of Escherichia coli O17:K52:H18 (strain UMN026 / ExPEC).